The chain runs to 294 residues: Large ribosomal subunit protein uL2c (294 aa).

Residues 224-249 (VMNPVDHPHGGGGEGKSPIGRSRPVT) are disordered.

This sequence belongs to the universal ribosomal protein uL2 family. Part of the 50S ribosomal subunit.

It localises to the plastid. It is found in the chloroplast. This Porphyra purpurea (Red seaweed) protein is Large ribosomal subunit protein uL2c (rpl2).